Here is a 308-residue protein sequence, read N- to C-terminus: Ecto-ADP-ribosyltransferase 5 (308 aa).

The first 23 residues, 1-23, serve as a signal peptide directing secretion; that stretch reads MILEDLLMVLSCLALHILWKVQA. A disulfide bond links cysteine 43 and cysteine 259. Positions 63–253 constitute a TR mART core domain; it reads ALLRESWEAA…IVTLWSYNQT (191 aa). Tyrosine 100 contributes to the NAD(+) binding site. Asparagine 102 carries N-linked (GlcNAc...) asparagine glycosylation. Arginine 161 and glutamine 181 together coordinate NAD(+). Arginine 161 is a catalytic residue. Serine 184 is a catalytic residue. An N-linked (GlcNAc...) asparagine glycan is attached at asparagine 197. Serine 215 serves as a coordination point for NAD(+). Residue glutamate 222 is part of the active site. Asparagine 251 carries N-linked (GlcNAc...) asparagine glycosylation.

Belongs to the Arg-specific ADP-ribosyltransferase family.

The protein localises to the secreted. The protein resides in the membrane. The enzyme catalyses L-arginyl-[protein] + NAD(+) = N(omega)-(ADP-D-ribosyl)-L-arginyl-[protein] + nicotinamide + H(+). This Rattus norvegicus (Rat) protein is Ecto-ADP-ribosyltransferase 5 (Art5).